Consider the following 368-residue polypeptide: Putative alcohol dehydrogenase D (368 aa).

The Zn(2+) site is built by Cys-40, His-61, Cys-91, Cys-94, Cys-97, Cys-105, and Cys-167.

The protein belongs to the zinc-containing alcohol dehydrogenase family. It depends on Zn(2+) as a cofactor.

The enzyme catalyses a primary alcohol + NAD(+) = an aldehyde + NADH + H(+). It catalyses the reaction a secondary alcohol + NAD(+) = a ketone + NADH + H(+). Its function is as follows. Required for maintaining the appropriate mycolic acid composition and permeability of the envelope on its exposure to acidic pH. In Mycobacterium tuberculosis (strain CDC 1551 / Oshkosh), this protein is Putative alcohol dehydrogenase D (adhD).